We begin with the raw amino-acid sequence, 261 residues long: Putative ketoacyl reductase (261 aa).

NADP(+)-binding residues include Thr15, Ser16, Ile18, Arg38, Gly39, Asp63, Val64, Asn90, Tyr157, Lys161, Val190, and Thr192. Tyr157 acts as the Proton acceptor in catalysis.

It belongs to the short-chain dehydrogenases/reductases (SDR) family. Homotetramer.

It functions in the pathway antibiotic biosynthesis; actinorhodin biosynthesis. This chain is Putative ketoacyl reductase (actIII), found in Streptomyces coelicolor (strain ATCC BAA-471 / A3(2) / M145).